The chain runs to 1296 residues: Phosphoribosylformylglycinamidine synthase (1296 aa).

The disordered stretch occupies residues 300-325 (APFSGAATGSGGEIRDEGATGRGSKP). ATP is bound by residues 304–315 (GAATGSGGEIRD) and Ala675. Residues Glu715, Asn719, and Asp885 each coordinate Mg(2+). Ser887 is a binding site for ATP. Residues 1043–1296 (MAILREQGVN…MFRNARKNVG (254 aa)) form the Glutamine amidotransferase type-1 domain. The active-site Nucleophile is Cys1136. The disordered stretch occupies residues 1232 to 1253 (TQYPANPNGSPEGITGITSTDG). Active-site residues include His1261 and Glu1263.

In the N-terminal section; belongs to the FGAMS family. In terms of assembly, monomer.

It is found in the cytoplasm. The catalysed reaction is N(2)-formyl-N(1)-(5-phospho-beta-D-ribosyl)glycinamide + L-glutamine + ATP + H2O = 2-formamido-N(1)-(5-O-phospho-beta-D-ribosyl)acetamidine + L-glutamate + ADP + phosphate + H(+). Its pathway is purine metabolism; IMP biosynthesis via de novo pathway; 5-amino-1-(5-phospho-D-ribosyl)imidazole from N(2)-formyl-N(1)-(5-phospho-D-ribosyl)glycinamide: step 1/2. Functionally, phosphoribosylformylglycinamidine synthase involved in the purines biosynthetic pathway. Catalyzes the ATP-dependent conversion of formylglycinamide ribonucleotide (FGAR) and glutamine to yield formylglycinamidine ribonucleotide (FGAM) and glutamate. The sequence is that of Phosphoribosylformylglycinamidine synthase from Pseudoalteromonas translucida (strain TAC 125).